Reading from the N-terminus, the 237-residue chain is MENQPKLNSSKEVIAFLAERFPLCFTAEGEARPLKIGIFQDLVERVQGEENLSKTQLRSALRLYTSSWRYLYGVKVGAERVDLDGNPCGVLEEQHVEHARKQLEEAKARVQAQRAEQQAKKREAAIAAGETPEPRRPRPAGKKPAPRREAGAAPENRKPRQSPRPQQVRPPRPQVEENQPRPVPVTDISKLQIGQEIKVRAGKSAMDATVLEIAKDGVRVQLSSGLAMIVRAEHLQF.

A disordered region spans residues 106 to 188 (AKARVQAQRA…QPRPVPVTDI (83 aa)). The span at 146–158 (PRREAGAAPENRK) shows a compositional bias: basic and acidic residues.

This sequence belongs to the ProQ family.

The protein resides in the cytoplasm. Its function is as follows. RNA chaperone with significant RNA binding, RNA strand exchange and RNA duplexing activities. May regulate ProP activity through an RNA-based, post-transcriptional mechanism. The sequence is that of RNA chaperone ProQ from Yersinia pseudotuberculosis serotype O:1b (strain IP 31758).